Consider the following 729-residue polypeptide: MTEITAEGNASTTTTVIDSKNGSVPKSPGKVLKRTVTEDIVTTFSSPAAWLLVIALIITWSAVAIVMFDLVDYKNFSASSIAKIGSDPLKLVRDAMEETTDWIYGFFSLLSDIISSEDEEDDDGDEDTDKGEIDEPPLRKKEIHKDKTEKQEKPERKIQTKVTHKEKEKGKEKVREKEKPEKKATHKEKIEKKEKPETKTLAKEQKKAKTAEKSEEKTKKEVKGGKQEKVKQTAAKVKEVQKTPSKPKEKEDKEKAAVSKHEQKDQYAFCRYMIDIFVHGDLKPGQSPAIPPPLPTEQASRPTPASPALEEKEGEKKKAEKKVTSETKKKEKEDIKKKSEKETAIDVEKKEPGKASETKQGTVKIAAQAAAKKDEKKEDSKKTKKPAEVEQPKGKKQEKKEKHVEPAKSPKKEHSVPSDKQVKAKTERAKEEIGAVSIKKAVPGKKEEKTTKTVEQEIRKEKSGKTSSILKDKEPIKGKEEKVPASLKEKEPETKKDEKMSKAGKEVKPKPPQLQGKKEEKPEPQIKKEAKPAISEKVQIHKQDIVKPEKTVSHGKPEEKVLKQVKAVTIEKTAKPKPTKKAEHREREPPSIKTDKPKPTPKGTSEVTESGKKKTEISEKESKEKADMKHLREEKVSTRKESLQLHNVTKAEKPARVSKDVEDVPASKKAKEGTEDVSPTKQKSPISFFQCVYLDGYNGYGFQFPFTPADRPGESSGQANSPGQKQQGQ.

Residues 1–28 (MTEITAEGNASTTTTVIDSKNGSVPKSP) are disordered. Residues 1 to 47 (MTEITAEGNASTTTTVIDSKNGSVPKSPGKVLKRTVTEDIVTTFSSP) are Cytoplasmic-facing. Residues 8–24 (GNASTTTTVIDSKNGSV) are compositionally biased toward polar residues. A helical transmembrane segment spans residues 48–68 (AAWLLVIALIITWSAVAIVMF). At 69-729 (DLVDYKNFSA…NSPGQKQQGQ (661 aa)) the chain is on the lumenal side. Residue Asn-75 is glycosylated (N-linked (GlcNAc...) asparagine). Over residues 117–129 (EDEEDDDGDEDTD) the composition is skewed to acidic residues. Disordered regions lie at residues 117-265 (EDEE…EQKD), 281-682 (DLKP…PTKQ), and 705-729 (PFTP…QQGQ). Composition is skewed to basic and acidic residues over residues 130 to 265 (KGEI…EQKD), 309 to 357 (LEEK…KASE), 371 to 433 (AKKD…KEEI), 444 to 509 (GKKE…EVKP), 516 to 531 (GKKE…KEAK), 538 to 562 (VQIH…EKVL), 580 to 598 (KKAE…DKPK), and 609 to 674 (ESGK…KEGT). N-linked (GlcNAc...) asparagine glycosylation is present at Asn-647. Residues 715 to 729 (SSGQANSPGQKQQGQ) show a composition bias toward polar residues.

Homooligomer of variable subunit number; disulfide-linked. Interacts with CASQ1 and RYR1 in skeletal muscle. Interacts with CASQ2. Post-translationally, phosphorylated by CaMK2. N-glycosylated.

It is found in the cell membrane. It localises to the sarcoplasmic reticulum membrane. Its function is as follows. Contributes to the regulation of lumenal Ca2+ release via the sarcoplasmic reticulum calcium release channels RYR1 and RYR2, a key step in triggering skeletal and heart muscle contraction. Required for normal organization of the triad junction, where T-tubules and the sarcoplasmic reticulum terminal cisternae are in close contact. Required for normal skeletal muscle strength. Plays a role in excitation-contraction coupling in the heart and in regulating the rate of heart beats. This Homo sapiens (Human) protein is Triadin (TRDN).